The primary structure comprises 273 residues: Large ribosomal subunit protein uL2cz/uL2cy (273 aa).

Disordered regions lie at residues 1 to 25 (MAIHLYKTSTSSTRNGAVDSQVKSN) and 224 to 273 (NPVD…RRRK).

Belongs to the universal ribosomal protein uL2 family. As to quaternary structure, part of the 50S ribosomal subunit.

The protein localises to the plastid. It is found in the chloroplast. This Phalaenopsis aphrodite subsp. formosana (Moth orchid) protein is Large ribosomal subunit protein uL2cz/uL2cy (rpl2-A).